A 369-amino-acid polypeptide reads, in one-letter code: Forkhead box protein I2-A (369 aa).

The segment at residues 124–218 (RPPYSYSSLI…DNGNFRRKRK (95 aa)) is a DNA-binding region (fork-head). A disordered region spans residues 215 to 252 (RKRKRKSESVGAGFDEDSNEDKKPLALKSLGSDSPQGA).

In terms of tissue distribution, localized to the animal hemisphere of early cleavage stage embryos. Zygotic expression is restricted to the dorsal part of the epibranchial placodes of the head within a region located near the tip of the first, second and third visceral pouch.

It localises to the nucleus. Functionally, possible transcriptional activator. In Xenopus laevis (African clawed frog), this protein is Forkhead box protein I2-A (foxi2-a).